A 740-amino-acid polypeptide reads, in one-letter code: Zn(2)-C6 fungal-type transcription factor mpsB (740 aa).

The zn(2)-C6 fungal-type DNA-binding region spans Arg25–Cys46. Residues Ser625 to Thr645 are disordered.

The protein resides in the nucleus. Functionally, transcription factor; part of the gene cluster that mediates the biosynthesis of macrophasetins, 3-decalinoyltetramic acids (DTAs) which feature a tetramate (pyrrolidine-2,4-dione) unit connected to a decalin fragment and that have potent bioactivities. The polypeptide is Zn(2)-C6 fungal-type transcription factor mpsB (Macrophomina phaseolina (strain MS6) (Charcoal rot fungus)).